A 784-amino-acid polypeptide reads, in one-letter code: PWWP domain-containing protein 2A (784 aa).

Disordered stretches follow at residues 1 to 32, 244 to 272, 463 to 567, and 605 to 654; these read MAAV…LGRL, KPVE…PEDV, AKEK…EMQD, and SSSA…SSKE. Over residues 244–266 the composition is skewed to basic and acidic residues; sequence KPVESIQEESKSFHEEPLVKSEE. Positions 536–556 are enriched in polar residues; the sequence is TRYSATRSAGETPSEIQSPSN. The segment covering 605–614 has biased composition (low complexity); sequence SSSASVCSSD. A PWWP domain is found at 684–744; it reads VGDIVWAKIY…LSQLTPFLEN (61 aa).

It localises to the nucleus. Functionally, H2A.Z-specific chromatin binding protein which plays an important role in the neural crest cell differentiation and/or migration during early development and is essential for the development of the head and eye. Acts as an adapter between distinct nucleosome components (H3K36me3 or H2A.Z) and chromatin-modifying complexes, contributing to the regulation of the levels of histone acetylation at actively transcribed genes. This is PWWP domain-containing protein 2A (pwwp2a) from Xenopus tropicalis (Western clawed frog).